Here is a 249-residue protein sequence, read N- to C-terminus: ATP synthase subunit a, chloroplastic (249 aa).

5 helical membrane passes run Gly38–Ala58, Val97–Ile117, Ile136–Ser156, Leu201–Leu221, and Gly222–Gly242.

Belongs to the ATPase A chain family. In terms of assembly, F-type ATPases have 2 components, CF(1) - the catalytic core - and CF(0) - the membrane proton channel. CF(1) has five subunits: alpha(3), beta(3), gamma(1), delta(1), epsilon(1). CF(0) has four main subunits: a, b, b' and c.

The protein localises to the plastid. The protein resides in the chloroplast thylakoid membrane. Functionally, key component of the proton channel; it plays a direct role in the translocation of protons across the membrane. This is ATP synthase subunit a, chloroplastic from Chlorokybus atmophyticus (Soil alga).